The primary structure comprises 60 residues: Metallothionein B (60 aa).

Residues 1 to 28 (MDPCECTKSGTCNCGGSCTCTNCSCTSC) are beta. A divalent metal cation contacts are provided by cysteine 4, cysteine 6, cysteine 12, cysteine 14, cysteine 18, cysteine 20, cysteine 23, cysteine 25, cysteine 28, cysteine 32, cysteine 33, cysteine 35, cysteine 36, cysteine 40, cysteine 43, cysteine 47, cysteine 49, cysteine 54, cysteine 58, and cysteine 59. Residues 29–60 (KKSCCPCCPSGCTKCASGCVCKGKTCDTSCCQ) form an alpha region.

This sequence belongs to the metallothionein superfamily. Type 1 family.

Its function is as follows. Metallothioneins have a high content of cysteine residues that bind various heavy metals. The protein is Metallothionein B (mtb) of Chaenocephalus aceratus (Blackfin icefish).